The primary structure comprises 666 residues: DNA mismatch repair protein MutL (666 aa).

This sequence belongs to the DNA mismatch repair MutL/HexB family.

This protein is involved in the repair of mismatches in DNA. It is required for dam-dependent methyl-directed DNA mismatch repair. May act as a 'molecular matchmaker', a protein that promotes the formation of a stable complex between two or more DNA-binding proteins in an ATP-dependent manner without itself being part of a final effector complex. This chain is DNA mismatch repair protein MutL, found in Clostridium botulinum (strain Kyoto / Type A2).